Here is a 1414-residue protein sequence, read N- to C-terminus: DNA-directed RNA polymerase subunit beta' (1414 aa).

Residues C70, C72, C85, and C88 each contribute to the Zn(2+) site. Mg(2+) contacts are provided by D460, D462, and D464. Zn(2+) contacts are provided by C815, C889, C896, and C899. The interval 1395–1414 (EAEAQFADISSTPDSDTDAS) is disordered.

It belongs to the RNA polymerase beta' chain family. In terms of assembly, the RNAP catalytic core consists of 2 alpha, 1 beta, 1 beta' and 1 omega subunit. When a sigma factor is associated with the core the holoenzyme is formed, which can initiate transcription. It depends on Mg(2+) as a cofactor. Zn(2+) serves as cofactor.

It carries out the reaction RNA(n) + a ribonucleoside 5'-triphosphate = RNA(n+1) + diphosphate. Functionally, DNA-dependent RNA polymerase catalyzes the transcription of DNA into RNA using the four ribonucleoside triphosphates as substrates. This is DNA-directed RNA polymerase subunit beta' from Herminiimonas arsenicoxydans.